The chain runs to 364 residues: D-alanine--D-alanine ligase (364 aa).

Residues 146 to 352 (KLCAMNAGIA…FAELVEKLLL (207 aa)) form the ATP-grasp domain. 179 to 234 (TKRFDWPLFVKPASLGSSVGISKVRNAEELAAALENACGLDSKALVEAAISGREIE) contributes to the ATP binding site. Asp-305, Glu-319, and Asn-321 together coordinate Mg(2+).

The protein belongs to the D-alanine--D-alanine ligase family. Mg(2+) serves as cofactor. It depends on Mn(2+) as a cofactor.

The protein resides in the cytoplasm. The enzyme catalyses 2 D-alanine + ATP = D-alanyl-D-alanine + ADP + phosphate + H(+). Its pathway is cell wall biogenesis; peptidoglycan biosynthesis. Functionally, cell wall formation. In Chlorobaculum tepidum (strain ATCC 49652 / DSM 12025 / NBRC 103806 / TLS) (Chlorobium tepidum), this protein is D-alanine--D-alanine ligase.